The primary structure comprises 756 residues: Serine/threonine-protein kinase DCLK2 (756 aa).

The segment at methionine 1–leucine 44 is disordered. Residues isoleucine 7 to proline 19 show a composition bias toward basic and acidic residues. The span at arginine 24–glycine 43 shows a compositional bias: low complexity. Threonine 61 is modified (phosphothreonine). 2 Doublecortin domains span residues lysine 72–threonine 158 and lysine 196–aspartate 279. Low complexity-rich tracts occupy residues lysine 301 to serine 311 and threonine 323 to serine 346. Positions lysine 301–proline 375 are disordered. Over residues isoleucine 353–asparagine 364 the composition is skewed to polar residues. Phosphoserine is present on serine 361. The 258-residue stretch at tyrosine 393 to valine 650 folds into the Protein kinase domain. Residues isoleucine 399 to valine 407 and lysine 422 contribute to the ATP site. The active-site Proton acceptor is the aspartate 514. A Phosphoserine modification is found at serine 646. Threonine 665 bears the Phosphothreonine mark. Residues glutamine 707–aspartate 756 are disordered. Residues proline 719–proline 740 show a composition bias toward pro residues.

It belongs to the protein kinase superfamily. CAMK Ser/Thr protein kinase family. CaMK subfamily. As to quaternary structure, binds to and stabilizes microtubules. Interacts with MAPK8IP1/JIP-1, MAPK8IP2/JIP-2, MAPK9/JNK2, PPP1R9B/NEURABIN-2 and actin. Autophosphorylated. As to expression, expressed in the central and peripheral nervous system including the brain, spinal cord, cranial and dorsal root ganglia and in the parasympathetic ganglia. Present in neurons, but not in glial cells, in most forebrain areas. Strong expression in the hippocampal CA1 pyramidal cell layer. Expressed in the photoreceptor sensory cilium complex and in eyes. Also detected in individual cells of the olfactory epithelium.

Its subcellular location is the cytoplasm. It is found in the cytoskeleton. The enzyme catalyses L-seryl-[protein] + ATP = O-phospho-L-seryl-[protein] + ADP + H(+). The catalysed reaction is L-threonyl-[protein] + ATP = O-phospho-L-threonyl-[protein] + ADP + H(+). Its function is as follows. Protein kinase with a significantly reduced Ca(2+)+/CAM affinity and dependence compared to other members of the CaMK family. May play a role in the down-regulation of CRE-dependent gene activation probably by phosphorylation of the CREB coactivator CRTC2/TORC2 and the resulting retention of TORC2 in the cytoplasm. The polypeptide is Serine/threonine-protein kinase DCLK2 (Dclk2) (Mus musculus (Mouse)).